The chain runs to 302 residues: Putative cyclin-D6-1 (302 aa).

The protein belongs to the cyclin family. Cyclin D subfamily.

The protein is Putative cyclin-D6-1 (CYCD6-1) of Arabidopsis thaliana (Mouse-ear cress).